Here is a 379-residue protein sequence, read N- to C-terminus: Lipid-A-disaccharide synthase (379 aa).

This sequence belongs to the LpxB family.

The enzyme catalyses a lipid X + a UDP-2-N,3-O-bis[(3R)-3-hydroxyacyl]-alpha-D-glucosamine = a lipid A disaccharide + UDP + H(+). It participates in bacterial outer membrane biogenesis; LPS lipid A biosynthesis. Condensation of UDP-2,3-diacylglucosamine and 2,3-diacylglucosamine-1-phosphate to form lipid A disaccharide, a precursor of lipid A, a phosphorylated glycolipid that anchors the lipopolysaccharide to the outer membrane of the cell. The protein is Lipid-A-disaccharide synthase of Vibrio parahaemolyticus serotype O3:K6 (strain RIMD 2210633).